The following is a 207-amino-acid chain: MYDYIRGVLTYISSSTMVIESQGLGFSIFAPERWLIELSSQLHRELIVYTYTVVRETEHVLYGFHTRGERECFRMLISFSGVGPKTGLAILNTFSLSQLCSIARAEDIKAIASVPGIGKKTAEKLMVDLKQKLADLLPLDAQILASWEPAKPSCMEEGIQALAALGYPKSSAERMIAEAMSELPDHASVAEILPIALKKNLQGLNKI.

Positions 1 to 65 are domain I; that stretch reads MYDYIRGVLT…ETEHVLYGFH (65 aa). The interval 66–144 is domain II; sequence TRGERECFRM…DLLPLDAQIL (79 aa). The tract at residues 145 to 155 is flexible linker; it reads ASWEPAKPSCM. The domain III stretch occupies residues 155 to 207; it reads MEEGIQALAALGYPKSSAERMIAEAMSELPDHASVAEILPIALKKNLQGLNKI.

This sequence belongs to the RuvA family. As to quaternary structure, homotetramer. Forms an RuvA(8)-RuvB(12)-Holliday junction (HJ) complex. HJ DNA is sandwiched between 2 RuvA tetramers; dsDNA enters through RuvA and exits via RuvB. An RuvB hexamer assembles on each DNA strand where it exits the tetramer. Each RuvB hexamer is contacted by two RuvA subunits (via domain III) on 2 adjacent RuvB subunits; this complex drives branch migration. In the full resolvosome a probable DNA-RuvA(4)-RuvB(12)-RuvC(2) complex forms which resolves the HJ.

Its subcellular location is the cytoplasm. Its function is as follows. The RuvA-RuvB-RuvC complex processes Holliday junction (HJ) DNA during genetic recombination and DNA repair, while the RuvA-RuvB complex plays an important role in the rescue of blocked DNA replication forks via replication fork reversal (RFR). RuvA specifically binds to HJ cruciform DNA, conferring on it an open structure. The RuvB hexamer acts as an ATP-dependent pump, pulling dsDNA into and through the RuvAB complex. HJ branch migration allows RuvC to scan DNA until it finds its consensus sequence, where it cleaves and resolves the cruciform DNA. The polypeptide is Holliday junction branch migration complex subunit RuvA (Chlamydia abortus (strain DSM 27085 / S26/3) (Chlamydophila abortus)).